A 534-amino-acid chain; its full sequence is Phosphoenolpyruvate carboxykinase (ATP) (534 aa).

Residues R59, Y200, and K206 each coordinate substrate. ATP-binding positions include K206, H225, and 242–250 (GLSGTGKTT). Mn(2+)-binding residues include K206 and H225. Position 263 (D263) interacts with Mn(2+). ATP contacts are provided by residues E291, R327, 443-444 (RI), and T449. Residue R327 coordinates substrate.

This sequence belongs to the phosphoenolpyruvate carboxykinase (ATP) family. It depends on Mn(2+) as a cofactor.

Its subcellular location is the cytoplasm. It catalyses the reaction oxaloacetate + ATP = phosphoenolpyruvate + ADP + CO2. It participates in carbohydrate biosynthesis; gluconeogenesis. Involved in the gluconeogenesis. Catalyzes the conversion of oxaloacetate (OAA) to phosphoenolpyruvate (PEP) through direct phosphoryl transfer between the nucleoside triphosphate and OAA. The chain is Phosphoenolpyruvate carboxykinase (ATP) from Agathobacter rectalis (strain ATCC 33656 / DSM 3377 / JCM 17463 / KCTC 5835 / VPI 0990) (Eubacterium rectale).